The primary structure comprises 48 residues: Photosystem II reaction center protein K (48 aa).

The propeptide occupies 1-11 (MFPSTNQEVLA). Residues 23–43 (IVDVLPIIPLLFLLLAFVWQA) form a helical membrane-spanning segment.

The protein belongs to the PsbK family. PSII is composed of 1 copy each of membrane proteins PsbA, PsbB, PsbC, PsbD, PsbE, PsbF, PsbH, PsbI, PsbJ, PsbK, PsbL, PsbM, PsbT, PsbY, PsbZ, Psb30/Ycf12, at least 3 peripheral proteins of the oxygen-evolving complex and a large number of cofactors. It forms dimeric complexes.

The protein resides in the plastid. It is found in the chloroplast thylakoid membrane. Its function is as follows. One of the components of the core complex of photosystem II (PSII). PSII is a light-driven water:plastoquinone oxidoreductase that uses light energy to abstract electrons from H(2)O, generating O(2) and a proton gradient subsequently used for ATP formation. It consists of a core antenna complex that captures photons, and an electron transfer chain that converts photonic excitation into a charge separation. This is Photosystem II reaction center protein K from Euglena sanguinea.